Here is a 774-residue protein sequence, read N- to C-terminus: Effector protein hopW1-1 (774 aa).

2 disordered regions span residues 1–33 (MSPA…QSPQ) and 301–340 (CQAG…VPGQ). The segment covering 9-23 (TPHSFPPSFTGTSSS) has biased composition (low complexity). The segment covering 24–33 (AENSHAQSPQ) has biased composition (polar residues).

This sequence belongs to the HopW family. In terms of assembly, interacts (via C-terminus) with Arabidopsis WIN1, WIN2 and WIN3.

It is found in the secreted. Its function is as follows. Induces hypersensitive response (HR). In Pseudomonas syringae pv. maculicola, this protein is Effector protein hopW1-1 (hopW1-1).